Consider the following 125-residue polypeptide: Large ribosomal subunit protein bL20 (125 aa).

This sequence belongs to the bacterial ribosomal protein bL20 family.

In terms of biological role, binds directly to 23S ribosomal RNA and is necessary for the in vitro assembly process of the 50S ribosomal subunit. It is not involved in the protein synthesizing functions of that subunit. The polypeptide is Large ribosomal subunit protein bL20 (Zymomonas mobilis subsp. mobilis (strain ATCC 31821 / ZM4 / CP4)).